Consider the following 654-residue polypeptide: Transcription factor E2-alpha (654 aa).

The short motif at 19-27 (LLDFSMMFP) is the 9aaTAD element. The disordered stretch occupies residues 31–103 (TNGKGRPASL…LGPGLGGKSG (73 aa)). Low complexity predominate over residues 55–68 (SSGSWGSGDQSSSS). A compositionally biased stretch (polar residues) spans 69–79 (FDPSRTFSEGT). Residues 84–94 (SHSSLSSSTFL) show a composition bias toward low complexity. Residues S134 and S139 each carry the phosphoserine modification. Disordered regions lie at residues 135–205 (PGPL…SAKT), 239–268 (MLGG…FGGL), 292–329 (SFSS…GSSG), and 343–385 (DHSS…YDGG). Residues 147–156 (SQYYPSYSGS) are compositionally biased toward low complexity. Positions 170–176 (PKKVRKV) match the Nuclear localization signal motif. Residues 256–268 (VGSSGSSSTFGGL) are compositionally biased toward low complexity. A compositionally biased stretch (low complexity) spans 343-354 (DHSSNNFSSSPS). T355 is subject to Phosphothreonine. At S359 the chain carries Phosphoserine. At R371 the chain carries Omega-N-methylarginine. S379 is subject to Phosphoserine. A leucine-zipper region spans residues 389–425 (LQSKIEDHLDEAIHVLRSHAVGTAGDMHTLLPGHGAL). The segment at 461 to 552 (NHAALPSQPG…KAEREKERRV (92 aa)) is disordered. K498 is covalently cross-linked (Glycyl lysine isopeptide (Lys-Gly) (interchain with G-Cter in SUMO2)). Residues 512-523 (DHSEEEKKELKA) are compositionally biased toward basic and acidic residues. S529 is modified (phosphoserine). Position 531 is a phosphothreonine (D531). Over residues 542–552 (QKAEREKERRV) the composition is skewed to basic and acidic residues. A bHLH domain is found at 549–602 (ERRVANNARERLRVRDINEAFKELGRMCQLHLNSEKPQTKLLILHQAVSVILNL). K625 is covalently cross-linked (Glycyl lysine isopeptide (Lys-Gly) (interchain with G-Cter in SUMO2)). Positions 633 to 654 (PQMVLSAPHPGLSEAHNPAGHM) are disordered.

Homodimer. Heterodimer; efficient DNA binding requires dimerization with another bHLH protein. Forms a heterodimer with ASH1, TWIST1 and TWIST2. Forms a heterodimer with MYOG; heterodimerization enhances MYOG DNA-binding and transcriptional activities. Forms a heterodimer with NEUROD1; the heterodimer is inhibited in presence of ID2, but not NR0B2, to E-box element. Forms a heterodimer with TCF15; the heterodimer binds E-box element. Forms a heterodimer with ATOH8; repress transcription of TCF3 and TCF3/NEUROG3 dimer-induced transactivation of E box-dependent promoters. Component of a nuclear TAL-1 complex composed at least of CBFA2T3, LDB1, TAL1 and TCF3. Interacts with NEUROD2, PTF1A and TGFB1I1. Interacts with EP300 and UBE2I. Interacts with BHLHA9. Interacts with ASB2; the interaction is mediated by SKP2 and targets TCF3 for Notch-induced proteasomal degradation. In terms of assembly, forms a heterodimer with ATOH7; required for ATOH7 DNA-binding. As to quaternary structure, interacts with RALGAPA1 and FIGLA. Post-translationally, phosphorylated following NGF stimulation. In terms of processing, undergoes Notch-induced ubiquitination and subsequent proteasomal degradation which is mediated by ASB1 or ASB2, the substrate-recognition components of probable ECS E3 ubiquitin-protein ligase complexes.

It is found in the nucleus. Its function is as follows. Transcriptional regulator involved in the initiation of neuronal differentiation and mesenchymal to epithelial transition. Heterodimers between TCF3 and tissue-specific basic helix-loop-helix (bHLH) proteins play major roles in determining tissue-specific cell fate during embryogenesis, like muscle or early B-cell differentiation. Together with TCF15, required for the mesenchymal to epithelial transition. Dimers bind DNA on E-box motifs: 5'-CANNTG-3'. Binds to the kappa-E2 site in the kappa immunoglobulin gene enhancer. Binds to IEB1 and IEB2, which are short DNA sequences in the insulin gene transcription control region. In terms of biological role, facilitates ATOH7 binding to DNA at the consensus sequence 5'-CAGGTG-3', and positively regulates transcriptional activity. The chain is Transcription factor E2-alpha (TCF3) from Homo sapiens (Human).